Here is a 206-residue protein sequence, read N- to C-terminus: MRNTLDNLLNAAGIVISDKQKNLLIQYVDMLNKWNKAYNLTSVRDPQQMLVRHIMDSIVVEPHLHGQRFIDVGTGPGLPGIPLAIVRPESHFTLLDSLGKRVRFLRQVQHELQLENITPVQSRVEDFPAEPPFDGVISRAFASLQDMISWCNHLPARTTGRFYALKGVLPQDELSSLPQGVLLDQVVRLSVPDLEGERHLIVLKPN.

Residues Gly73, Leu78, 124–125 (VE), and Arg139 contribute to the S-adenosyl-L-methionine site.

It belongs to the methyltransferase superfamily. RNA methyltransferase RsmG family.

The protein localises to the cytoplasm. It catalyses the reaction guanosine(527) in 16S rRNA + S-adenosyl-L-methionine = N(7)-methylguanosine(527) in 16S rRNA + S-adenosyl-L-homocysteine. Its function is as follows. Specifically methylates the N7 position of guanine in position 527 of 16S rRNA. The protein is Ribosomal RNA small subunit methyltransferase G of Pectobacterium atrosepticum (strain SCRI 1043 / ATCC BAA-672) (Erwinia carotovora subsp. atroseptica).